The sequence spans 819 residues: Zinc finger protein 658B (819 aa).

The segment at 141 to 166 (YLSDEHGKCRKSFYWKAHLIQHERPH) adopts a C2H2-type 1; degenerate zinc-finger fold. 14 C2H2-type zinc fingers span residues 200–222 (YECN…LRIH), 278–300 (YECI…QRIH), 306–328 (YECV…QRVH), 334–356 (YECN…QRIH), 362–384 (YECS…HRIH), 390–412 (YECN…QRIH), 418–440 (YECN…QRIH), 446–468 (YECS…QRIH), 474–496 (YKCN…QNIH), 502–524 (YECS…RRIH), 530–552 (YECS…ERIH), 558–580 (YECN…QRIH), 586–608 (YECN…QRIH), and 614–636 (YECN…HRIH). A C2H2-type 16; degenerate zinc finger spans residues 642 to 664 (YECNDCGKTFSKTSHLRAHLRTR). 5 consecutive C2H2-type zinc fingers follow at residues 670–692 (YECS…QRVH), 698–720 (YECN…QRIH), 726–748 (YECN…QRIH), 754–776 (YECN…QRIH), and 782–805 (YECD…TRMH).

This sequence belongs to the krueppel C2H2-type zinc-finger protein family.

Its subcellular location is the nucleus. May be involved in transcriptional regulation. The sequence is that of Zinc finger protein 658B (ZNF658B) from Homo sapiens (Human).